The chain runs to 195 residues: MPKVGMQPIRRQQLIEATLAAINDVGMHDASIVQIARRAGVSNGIISHYFRDKNGLLEATMRYLISHLGLAVKSRLLNLTENTPRARLRAIVQGNFDDSQTNSAAMKTWLAFWASSLHSPMLHRLQQVNDRRLYSNLSVEFSRCLPKDKARIAAKGVAGLIDGLWLRGALSHNVFNCEEALSITYDYIDQQLTHA.

Positions 8 to 68 (PIRRQQLIEA…ATMRYLISHL (61 aa)) constitute an HTH tetR-type domain. Residues 31–50 (SIVQIARRAGVSNGIISHYF) constitute a DNA-binding region (H-T-H motif).

The protein operates within amine and polyamine biosynthesis; betaine biosynthesis via choline pathway [regulation]. Repressor involved in the biosynthesis of the osmoprotectant glycine betaine. It represses transcription of the choline transporter BetT and the genes of BetAB involved in the synthesis of glycine betaine. This chain is HTH-type transcriptional regulator BetI, found in Pectobacterium atrosepticum (strain SCRI 1043 / ATCC BAA-672) (Erwinia carotovora subsp. atroseptica).